The sequence spans 354 residues: RNA 3'-terminal phosphate cyclase (354 aa).

ATP contacts are provided by residues Gln-100 and 290–293; that span reads HMGD. Catalysis depends on His-316, which acts as the Tele-AMP-histidine intermediate.

It belongs to the RNA 3'-terminal cyclase family. Type 1 subfamily.

The protein localises to the cytoplasm. It carries out the reaction a 3'-end 3'-phospho-ribonucleotide-RNA + ATP = a 3'-end 2',3'-cyclophospho-ribonucleotide-RNA + AMP + diphosphate. Its function is as follows. Catalyzes the conversion of 3'-phosphate to a 2',3'-cyclic phosphodiester at the end of RNA. The mechanism of action of the enzyme occurs in 3 steps: (A) adenylation of the enzyme by ATP; (B) transfer of adenylate to an RNA-N3'P to produce RNA-N3'PP5'A; (C) and attack of the adjacent 2'-hydroxyl on the 3'-phosphorus in the diester linkage to produce the cyclic end product. The biological role of this enzyme is unknown but it is likely to function in some aspects of cellular RNA processing. The sequence is that of RNA 3'-terminal phosphate cyclase from Caldivirga maquilingensis (strain ATCC 700844 / DSM 13496 / JCM 10307 / IC-167).